Here is a 203-residue protein sequence, read N- to C-terminus: Dephospho-CoA kinase (203 aa).

Positions 3–201 (SVGLTGGIGS…QRYLECAAAA (199 aa)) constitute a DPCK domain. 11-16 (GSGKTT) contacts ATP.

The protein belongs to the CoaE family.

The protein localises to the cytoplasm. The catalysed reaction is 3'-dephospho-CoA + ATP = ADP + CoA + H(+). The protein operates within cofactor biosynthesis; coenzyme A biosynthesis; CoA from (R)-pantothenate: step 5/5. Its function is as follows. Catalyzes the phosphorylation of the 3'-hydroxyl group of dephosphocoenzyme A to form coenzyme A. The chain is Dephospho-CoA kinase from Burkholderia pseudomallei (strain 1710b).